The sequence spans 333 residues: Phosphate acyltransferase (333 aa).

It belongs to the PlsX family. As to quaternary structure, homodimer. Probably interacts with PlsY.

Its subcellular location is the cytoplasm. It carries out the reaction a fatty acyl-[ACP] + phosphate = an acyl phosphate + holo-[ACP]. It participates in lipid metabolism; phospholipid metabolism. Its function is as follows. Catalyzes the reversible formation of acyl-phosphate (acyl-PO(4)) from acyl-[acyl-carrier-protein] (acyl-ACP). This enzyme utilizes acyl-ACP as fatty acyl donor, but not acyl-CoA. This Bacillus subtilis (strain 168) protein is Phosphate acyltransferase.